Here is a 300-residue protein sequence, read N- to C-terminus: uncharacterized protein (300 aa).

A run of 10 helical transmembrane segments spans residues 4–24 (IIII…WIAM), 31–51 (IPPF…LIIL), 68–88 (FQIF…LYGG), 95–115 (ISSI…HFYL), 120–140 (NFIQ…VLLI), 146–166 (CFFQ…HAVI), 177–197 (VSVI…LSII), 214–234 (ILAV…SYFY), 242–262 (FYAS…EIYI), and 272–292 (LWFI…INFF). EamA domains lie at 15–139 (ITWG…FVLL) and 161–287 (LSHA…LTLI).

The protein belongs to the EamA transporter family.

It localises to the cell membrane. This is an uncharacterized protein from Buchnera aphidicola subsp. Schizaphis graminum (strain Sg).